The chain runs to 618 residues: Protein fem-1 homolog C (618 aa).

ANK repeat units lie at residues 2–31 (DLKT…DREV), 40–70 (NGAT…PVEL), 82–111 (EGAP…SVNN), 115–144 (TNST…DLEV), 148–177 (HGHT…DVNR), 181–210 (KGNT…SMEK), and 213–243 (YGMT…GLAE). TPR repeat units lie at residues 245-279 (ISAL…RHSE) and 337-370 (SYYI…QQSN). ANK repeat units lie at residues 482 to 524 (NGFS…DVNS) and 528 to 557 (DDNS…HFDS).

The protein belongs to the fem-1 family. As to quaternary structure, component of a CRL2 E3 ubiquitin-protein ligase complex, also named ECS (Elongin BC-CUL2/5-SOCS-box protein) complex.

It participates in protein modification; protein ubiquitination. In terms of biological role, substrate-recognition component of a Cul2-RING (CRL2) E3 ubiquitin-protein ligase complex of the DesCEND (destruction via C-end degrons) pathway, which recognizes a C-degron located at the extreme C terminus of target proteins, leading to their ubiquitination and degradation. The C-degron recognized by the DesCEND pathway is usually a motif of less than ten residues and can be present in full-length proteins, truncated proteins or proteolytically cleaved forms. The CRL2(FEM1C) complex specifically recognizes proteins with an arginine at the C-terminus: recognizes and binds proteins ending with -Lys/Arg-Xaa-Arg and -Lys/Arg-Xaa-Xaa-Arg C-degrons, leading to their ubiquitination and degradation. In Danio rerio (Zebrafish), this protein is Protein fem-1 homolog C.